The following is a 347-amino-acid chain: NADH-ubiquinone oxidoreductase chain 2 (347 aa).

11 helical membrane passes run 3–23, 25–45, 66–86, 96–116, 122–142, 145–165, 178–198, 200–220, 237–257, 274–294, and 325–345; these read PIIF…VMIS, HWLR…PIMM, ASML…QWTV, MLMT…FWVP, IPLS…MSVL, ILPS…IMIG, IMAY…PYNP, MMLL…LLFM, MPIM…LPPL, NSII…YFYM, and LLPT…ILSI.

This sequence belongs to the complex I subunit 2 family. As to quaternary structure, core subunit of respiratory chain NADH dehydrogenase (Complex I) which is composed of 45 different subunits. Interacts with TMEM242.

The protein resides in the mitochondrion inner membrane. The enzyme catalyses a ubiquinone + NADH + 5 H(+)(in) = a ubiquinol + NAD(+) + 4 H(+)(out). In terms of biological role, core subunit of the mitochondrial membrane respiratory chain NADH dehydrogenase (Complex I) which catalyzes electron transfer from NADH through the respiratory chain, using ubiquinone as an electron acceptor. Essential for the catalytic activity and assembly of complex I. The chain is NADH-ubiquinone oxidoreductase chain 2 from Capra hircus (Goat).